The primary structure comprises 472 residues: Siroheme synthase 1 (472 aa).

Positions 1-203 (MDYLPLFADL…GQLAQAEEEL (203 aa)) are precorrin-2 dehydrogenase /sirohydrochlorin ferrochelatase. NAD(+) contacts are provided by residues 22–23 (EV) and 43–44 (QT). The residue at position 128 (Ser-128) is a Phosphoserine. The interval 215–472 (GEVALVGAGP…AISPSVVNLA (258 aa)) is uroporphyrinogen-III C-methyltransferase. Pro-224 contributes to the S-adenosyl-L-methionine binding site. Asp-247 functions as the Proton acceptor in the catalytic mechanism. The Proton donor role is filled by Lys-269. S-adenosyl-L-methionine-binding positions include 300-302 (GGD), Ile-305, 330-331 (TA), Met-382, and Gly-411.

It in the N-terminal section; belongs to the precorrin-2 dehydrogenase / sirohydrochlorin ferrochelatase family. The protein in the C-terminal section; belongs to the precorrin methyltransferase family.

The catalysed reaction is uroporphyrinogen III + 2 S-adenosyl-L-methionine = precorrin-2 + 2 S-adenosyl-L-homocysteine + H(+). The enzyme catalyses precorrin-2 + NAD(+) = sirohydrochlorin + NADH + 2 H(+). It catalyses the reaction siroheme + 2 H(+) = sirohydrochlorin + Fe(2+). Its pathway is cofactor biosynthesis; adenosylcobalamin biosynthesis; precorrin-2 from uroporphyrinogen III: step 1/1. The protein operates within cofactor biosynthesis; adenosylcobalamin biosynthesis; sirohydrochlorin from precorrin-2: step 1/1. It participates in porphyrin-containing compound metabolism; siroheme biosynthesis; precorrin-2 from uroporphyrinogen III: step 1/1. It functions in the pathway porphyrin-containing compound metabolism; siroheme biosynthesis; siroheme from sirohydrochlorin: step 1/1. Its pathway is porphyrin-containing compound metabolism; siroheme biosynthesis; sirohydrochlorin from precorrin-2: step 1/1. Functionally, multifunctional enzyme that catalyzes the SAM-dependent methylations of uroporphyrinogen III at position C-2 and C-7 to form precorrin-2 via precorrin-1. Then it catalyzes the NAD-dependent ring dehydrogenation of precorrin-2 to yield sirohydrochlorin. Finally, it catalyzes the ferrochelation of sirohydrochlorin to yield siroheme. This chain is Siroheme synthase 1, found in Yersinia enterocolitica serotype O:8 / biotype 1B (strain NCTC 13174 / 8081).